The following is a 55-amino-acid chain: ATP synthase F(0) complex subunit 8 (55 aa).

A helical membrane pass occupies residues 4-24 (LNPAPWFTILVFSWMIFLAII). Polar residues predominate over residues 32-41 (TSPNDSSPLS). Residues 32 to 55 (TSPNDSSPLSTEKHKTESWDWPWQ) form a disordered region.

Belongs to the ATPase protein 8 family. As to quaternary structure, component of the ATP synthase complex composed at least of ATP5F1A/subunit alpha, ATP5F1B/subunit beta, ATP5MC1/subunit c (homooctomer), MT-ATP6/subunit a, MT-ATP8/subunit 8, ATP5ME/subunit e, ATP5MF/subunit f, ATP5MG/subunit g, ATP5MK/subunit k, ATP5MJ/subunit j, ATP5F1C/subunit gamma, ATP5F1D/subunit delta, ATP5F1E/subunit epsilon, ATP5PF/subunit F6, ATP5PB/subunit b, ATP5PD/subunit d, ATP5PO/subunit OSCP. ATP synthase complex consists of a soluble F(1) head domain (subunits alpha(3) and beta(3)) - the catalytic core - and a membrane F(0) domain - the membrane proton channel (subunits c, a, 8, e, f, g, k and j). These two domains are linked by a central stalk (subunits gamma, delta, and epsilon) rotating inside the F1 region and a stationary peripheral stalk (subunits F6, b, d, and OSCP).

The protein localises to the mitochondrion membrane. In terms of biological role, subunit 8, of the mitochondrial membrane ATP synthase complex (F(1)F(0) ATP synthase or Complex V) that produces ATP from ADP in the presence of a proton gradient across the membrane which is generated by electron transport complexes of the respiratory chain. ATP synthase complex consist of a soluble F(1) head domain - the catalytic core - and a membrane F(1) domain - the membrane proton channel. These two domains are linked by a central stalk rotating inside the F(1) region and a stationary peripheral stalk. During catalysis, ATP synthesis in the catalytic domain of F(1) is coupled via a rotary mechanism of the central stalk subunits to proton translocation. In vivo, can only synthesize ATP although its ATP hydrolase activity can be activated artificially in vitro. Part of the complex F(0) domain. This Formosania lacustris (Oriental stream loach) protein is ATP synthase F(0) complex subunit 8.